A 346-amino-acid chain; its full sequence is Hydroxycarboxylic acid receptor 1 (346 aa).

The Extracellular segment spans residues 1-21 (MYNGSCCRIEGDTISQVMPPL). A glycan (N-linked (GlcNAc...) asparagine) is linked at asparagine 3. The helical transmembrane segment at 22–42 (LIVAFVLGALGNGVALCGFCF) threads the bilayer. Over 43-49 (HMKTWKP) the chain is Cytoplasmic. A helical membrane pass occupies residues 50–70 (STVYLFNLAVADFLLMICLPF). Residues 71-89 (RTDYYLRRRHWAFGDIPCR) lie on the Extracellular side of the membrane. The cysteines at positions 88 and 165 are disulfide-linked. A helical transmembrane segment spans residues 90 to 110 (VGLFTLAMNRAGSIVFLTVVA). Topologically, residues 111-130 (ADRYFKVVHPHHAVNTISTR) are cytoplasmic. Residues 131–151 (VAAGIVCTLWALVILGTVYLL) form a helical membrane-spanning segment. At 152–182 (LENHLCVQETAVSCESFIMESANGWHDIMFQ) the chain is on the extracellular side. Residues 183–203 (LEFFMPLGIILFCSFKIVWSL) form a helical membrane-spanning segment. The Cytoplasmic segment spans residues 204–220 (RRRQQLARQARMKKATR). Residues 221 to 241 (FIMVVAIVFITCYLPSVSARL) traverse the membrane as a helical segment. At 242 to 261 (YFLWTVPSSACDPSVHGALH) the chain is on the extracellular side. A helical transmembrane segment spans residues 262-281 (ITLSFTYMNSMLDPLVYYFS). The Cytoplasmic segment spans residues 282 to 346 (SPSFPKFYNK…QWDPHIVEWH (65 aa)).

Belongs to the G-protein coupled receptor 1 family. Expressed abundantly in brown and white fat. It also detectable at lower levels in liver, kidney, skeletal muscle, brain and pituitary. Not detected in frontal, temporal and occipital lobes of the cortex, basal forebrain, caudate nucleus, nucleus accumbens and hippocampus.

The protein resides in the cell membrane. Functionally, acts as a receptor for L-lactate and mediates its anti-lipolytic effect through a G(i)-protein-mediated pathway. In Homo sapiens (Human), this protein is Hydroxycarboxylic acid receptor 1 (HCAR1).